The primary structure comprises 97 residues: MTSSSTPRMHTYKRTSSPRSPTNTGELFTPAHEENVRFIHDTWLCVLRDIKCPQNHERNDRGPQEYVEKNPNPNLHSFIPVDLSDLKKRNTQDSKKS.

A compositionally biased stretch (polar residues) spans 1-26; that stretch reads MTSSSTPRMHTYKRTSSPRSPTNTGE. Disordered stretches follow at residues 1-27 and 54-97; these read MTSS…TGEL and QNHE…SKKS. Composition is skewed to basic and acidic residues over residues 54-68 and 84-97; these read QNHE…EYVE and SDLK…SKKS. The PXDLS motif motif lies at 80 to 84; sequence PVDLS.

This sequence belongs to the MCRIP family.

It is found in the nucleus. The protein resides in the cytoplasm. The protein localises to the stress granule. Its function is as follows. May play a role in the regulation of the epithelial-mesenchymal transition. This Danio rerio (Zebrafish) protein is Mapk-regulated corepressor-interacting protein 1 (mcrip1).